We begin with the raw amino-acid sequence, 399 residues long: Tryptophan synthase beta chain (399 aa).

Lys86 carries the N6-(pyridoxal phosphate)lysine modification.

Belongs to the TrpB family. In terms of assembly, tetramer of two alpha and two beta chains. It depends on pyridoxal 5'-phosphate as a cofactor.

The enzyme catalyses (1S,2R)-1-C-(indol-3-yl)glycerol 3-phosphate + L-serine = D-glyceraldehyde 3-phosphate + L-tryptophan + H2O. The protein operates within amino-acid biosynthesis; L-tryptophan biosynthesis; L-tryptophan from chorismate: step 5/5. In terms of biological role, the beta subunit is responsible for the synthesis of L-tryptophan from indole and L-serine. This Buchnera aphidicola subsp. Schizaphis graminum (strain Sg) protein is Tryptophan synthase beta chain (trpB).